Reading from the N-terminus, the 262-residue chain is Taurine import ATP-binding protein TauB (262 aa).

In terms of domain architecture, ABC transporter spans 4-233 (LELERISAQY…RYAAGESARA (230 aa)). 38-45 (GPSGSGKT) contacts ATP.

It belongs to the ABC transporter superfamily. Taurine importer (TC 3.A.1.17.1) family. The complex is composed of two ATP-binding proteins (TauB), two transmembrane proteins (TauC) and a solute-binding protein (TauA).

Its subcellular location is the cell inner membrane. The catalysed reaction is taurine(out) + ATP + H2O = taurine(in) + ADP + phosphate + H(+). Part of the ABC transporter complex TauABC involved in taurine import. Responsible for energy coupling to the transport system. The protein is Taurine import ATP-binding protein TauB of Pseudomonas putida (strain ATCC 47054 / DSM 6125 / CFBP 8728 / NCIMB 11950 / KT2440).